The following is a 139-amino-acid chain: S-protein homolog 14 (139 aa).

The N-terminal stretch at 1 to 20 (MNRFIIFMFVVVTYFGLNVA) is a signal peptide. A glycan (N-linked (GlcNAc...) asparagine) is linked at asparagine 136.

The protein belongs to the plant self-incompatibility (S1) protein family.

It is found in the secreted. The sequence is that of S-protein homolog 14 from Arabidopsis thaliana (Mouse-ear cress).